The following is a 347-amino-acid chain: Quinolinate synthase (347 aa).

Residues His-47 and Ser-68 each contribute to the iminosuccinate site. Cys-113 serves as a coordination point for [4Fe-4S] cluster. Residues 139-141 (YAN) and Ser-156 contribute to the iminosuccinate site. Cys-200 is a [4Fe-4S] cluster binding site. Iminosuccinate contacts are provided by residues 226-228 (HPE) and Thr-243. [4Fe-4S] cluster is bound at residue Cys-297.

Belongs to the quinolinate synthase family. Type 1 subfamily. It depends on [4Fe-4S] cluster as a cofactor.

The protein localises to the cytoplasm. It catalyses the reaction iminosuccinate + dihydroxyacetone phosphate = quinolinate + phosphate + 2 H2O + H(+). Its pathway is cofactor biosynthesis; NAD(+) biosynthesis; quinolinate from iminoaspartate: step 1/1. Its function is as follows. Catalyzes the condensation of iminoaspartate with dihydroxyacetone phosphate to form quinolinate. This Shigella flexneri protein is Quinolinate synthase.